Consider the following 501-residue polypeptide: Cytochrome P450 monooxygeanse terP (501 aa).

Residues 2 to 22 traverse the membrane as a helical segment; sequence PSLLLSLLLLQVPIICAWLLV. Residue Cys441 coordinates heme.

Belongs to the cytochrome P450 family. Requires heme as cofactor.

The protein localises to the membrane. Its pathway is secondary metabolite biosynthesis. In terms of biological role, cytochrome P450 monooxygeanse; part of the gene cluster that mediates the biosynthesis of terpendoles, indole-diterpene (IDT) mycotoxins including terpendole I, terpendole K, terpendole C, as well as the kinesin Eg5 inhibitor terpendole E. TerP has dual activity and is able to convert terpendole E to 13-desoxyterpendole I and paspaline to 13-desoxypaxilline. Terpendoles biosynthesis begins with the synthesis of geranylgeranyl diphosphate (GGPP) by a yet unidentified GGPP synthase. Condensation of indole-3-glycerol phosphate with GGPP by the prenyltransferase terC then forms 3-geranylgeranylindole (3-GGI), followed by epoxidation and cyclization of this intermediate (by the FAD-dependent monooxygeanse terM and the terpene cyclase terB) to form paspaline. The cytochrome monooxygenase terQ then hydroxylates paspalline at C-11 to yield terpendole E. The cytochrome monooxygenase terP converts terpendole E to 13-desoxyterpendole I, and terQ converts 13-desoxyterpendole I into terpendole I. TerF and terK are required for conversion of terpendole I to terpendole C which is further converted to terpendole K. This chain is Cytochrome P450 monooxygeanse terP, found in Tolypocladium album (Soil fungus).